Reading from the N-terminus, the 119-residue chain is Protein TusC (119 aa).

This sequence belongs to the DsrF/TusC family. Heterohexamer, formed by a dimer of trimers. The hexameric TusBCD complex contains 2 copies each of TusB, TusC and TusD. The TusBCD complex interacts with TusE.

The protein localises to the cytoplasm. Part of a sulfur-relay system required for 2-thiolation of 5-methylaminomethyl-2-thiouridine (mnm(5)s(2)U) at tRNA wobble positions. The protein is Protein TusC of Buchnera aphidicola subsp. Acyrthosiphon pisum (strain APS) (Acyrthosiphon pisum symbiotic bacterium).